A 207-amino-acid polypeptide reads, in one-letter code: Large ribosomal subunit protein uL4 (207 aa).

The segment at 48-86 (THKVKNRSEVRGGGRKPWRQKGTGRARQGSIRSPQWRGG) is disordered. Positions 60–71 (GGRKPWRQKGTG) are enriched in basic residues.

It belongs to the universal ribosomal protein uL4 family. Part of the 50S ribosomal subunit.

One of the primary rRNA binding proteins, this protein initially binds near the 5'-end of the 23S rRNA. It is important during the early stages of 50S assembly. It makes multiple contacts with different domains of the 23S rRNA in the assembled 50S subunit and ribosome. In terms of biological role, forms part of the polypeptide exit tunnel. This is Large ribosomal subunit protein uL4 from Bacillus licheniformis (strain ATCC 14580 / DSM 13 / JCM 2505 / CCUG 7422 / NBRC 12200 / NCIMB 9375 / NCTC 10341 / NRRL NRS-1264 / Gibson 46).